The primary structure comprises 617 residues: Proline--tRNA ligase (617 aa).

It belongs to the class-II aminoacyl-tRNA synthetase family. ProS type 1 subfamily. In terms of assembly, homodimer.

It localises to the cytoplasm. The catalysed reaction is tRNA(Pro) + L-proline + ATP = L-prolyl-tRNA(Pro) + AMP + diphosphate. Catalyzes the attachment of proline to tRNA(Pro) in a two-step reaction: proline is first activated by ATP to form Pro-AMP and then transferred to the acceptor end of tRNA(Pro). As ProRS can inadvertently accommodate and process non-cognate amino acids such as alanine and cysteine, to avoid such errors it has two additional distinct editing activities against alanine. One activity is designated as 'pretransfer' editing and involves the tRNA(Pro)-independent hydrolysis of activated Ala-AMP. The other activity is designated 'posttransfer' editing and involves deacylation of mischarged Ala-tRNA(Pro). The misacylated Cys-tRNA(Pro) is not edited by ProRS. The chain is Proline--tRNA ligase from Streptococcus pneumoniae (strain P1031).